The following is a 67-amino-acid chain: Light-harvesting protein B-870 alpha chain (67 aa).

Met-1 is subject to N-formylmethionine; in strain DSM 149 and DSM 151. Over 1–12 (MWRIWRLFDPMR) the chain is Cytoplasmic. Residues 13-33 (AMVAQAVFLLGLAVLIHLMLL) form a helical membrane-spanning segment. His-29 provides a ligand contact to a bacteriochlorophyll. Topologically, residues 34-67 (GTNKYNWLDGAKKAPAATAVAPVPAEVTSLAQAK) are periplasmic.

This sequence belongs to the antenna complex alpha subunit family. As to quaternary structure, an alpha/beta heterodimer. The core complex is formed by different alpha and beta chains, binding bacteriochlorophyll molecules, and arranged most probably in tetrameric structures disposed around the reaction center. The non-pigmented gamma chains may constitute additional components. Post-translationally, the N-terminus is blocked.

The protein resides in the cell inner membrane. In terms of biological role, antenna complexes are light-harvesting systems, which transfer the excitation energy to the reaction centers. The chain is Light-harvesting protein B-870 alpha chain (pufA) from Rubrivivax gelatinosus (Rhodocyclus gelatinosus).